The following is a 163-amino-acid chain: MTTAFYPGSFDPITNGHLDVLVQALNVAAKVIVAIGVHPGKAPLFSFDERADLIRAALEETLPERAADISVVSFDNLVVDAAREHGARLLVRGLRDGTDLDYEMQMAGMNRQMAPDIQTLFLPAGTASRPITATLVRQIAAMGGDVSAFVPGAVHQALQAKRK.

Ser9 is a substrate binding site. ATP is bound by residues 9-10 (SF) and His17. Residues Lys41, Val78, and Arg92 each contribute to the substrate site. ATP is bound by residues 93 to 95 (GLR), Glu103, and 128 to 134 (SRPITAT).

This sequence belongs to the bacterial CoaD family. Homohexamer. Mg(2+) serves as cofactor.

It localises to the cytoplasm. The enzyme catalyses (R)-4'-phosphopantetheine + ATP + H(+) = 3'-dephospho-CoA + diphosphate. Its pathway is cofactor biosynthesis; coenzyme A biosynthesis; CoA from (R)-pantothenate: step 4/5. In terms of biological role, reversibly transfers an adenylyl group from ATP to 4'-phosphopantetheine, yielding dephospho-CoA (dPCoA) and pyrophosphate. The polypeptide is Phosphopantetheine adenylyltransferase (Rhizobium meliloti (strain 1021) (Ensifer meliloti)).